We begin with the raw amino-acid sequence, 357 residues long: CD4+ T-cell-stimulating antigen (357 aa).

Positions 1 to 22 (MKKRTFALALSMIIASGVILGA) are cleaved as a signal peptide. Cysteine 23 carries N-palmitoyl cysteine lipidation. Cysteine 23 is lipidated: S-diacylglycerol cysteine.

It belongs to the BMP lipoprotein family.

Its subcellular location is the cell membrane. This chain is CD4+ T-cell-stimulating antigen (tcsA), found in Listeria monocytogenes serovar 1/2a (strain ATCC BAA-679 / EGD-e).